The chain runs to 257 residues: Imidazole glycerol phosphate synthase subunit HisF (257 aa).

Active-site residues include Asp12 and Asp131.

Belongs to the HisA/HisF family. In terms of assembly, heterodimer of HisH and HisF.

The protein resides in the cytoplasm. It catalyses the reaction 5-[(5-phospho-1-deoxy-D-ribulos-1-ylimino)methylamino]-1-(5-phospho-beta-D-ribosyl)imidazole-4-carboxamide + L-glutamine = D-erythro-1-(imidazol-4-yl)glycerol 3-phosphate + 5-amino-1-(5-phospho-beta-D-ribosyl)imidazole-4-carboxamide + L-glutamate + H(+). It participates in amino-acid biosynthesis; L-histidine biosynthesis; L-histidine from 5-phospho-alpha-D-ribose 1-diphosphate: step 5/9. IGPS catalyzes the conversion of PRFAR and glutamine to IGP, AICAR and glutamate. The HisF subunit catalyzes the cyclization activity that produces IGP and AICAR from PRFAR using the ammonia provided by the HisH subunit. This chain is Imidazole glycerol phosphate synthase subunit HisF, found in Rhodococcus erythropolis (strain PR4 / NBRC 100887).